Here is a 154-residue protein sequence, read N- to C-terminus: Protein X (154 aa).

Residues 68–117 form a mitochondrial targeting sequence region; sequence PCALRFTSARRMETTVNAHRNLPKVLHKRTLGLSAMSTTDLEAHFKDCVF.

It belongs to the orthohepadnavirus protein X family. May form homodimer. May interact with host CEBPA, CFLAR, CREB1, DDB1, E4F1, HBXIP, HSPD1/HSP60, NFKBIA, POLR2E and SMAD4. Interacts with host SMC5-SMC6 complex and induces its degradation. Interacts with host TRPC4AP; leading to prevent ubiquitination of TRPC4AP. Interacts with host PLSCR1; this interaction promotes ubiquitination and degradation of HBx and impairs HBx-mediated cell proliferation. Post-translationally, a fraction may be phosphorylated in insect cells and HepG2 cells, a human hepatoblastoma cell line. Phosphorylated in vitro by host protein kinase C or mitogen-activated protein kinase. N-acetylated in insect cells.

It is found in the host cytoplasm. Its subcellular location is the host nucleus. The protein localises to the host mitochondrion. Functionally, multifunctional protein that plays a role in silencing host antiviral defenses and promoting viral transcription. Does not seem to be essential for HBV infection. May be directly involved in development of cirrhosis and liver cancer (hepatocellular carcinoma). Most of cytosolic activities involve modulation of cytosolic calcium. The effect on apoptosis is controversial depending on the cell types in which the studies have been conducted. May induce apoptosis by localizing in mitochondria and causing loss of mitochondrial membrane potential. May also modulate apoptosis by binding host CFLAR, a key regulator of the death-inducing signaling complex (DISC). Promotes viral transcription by using the host E3 ubiquitin ligase DDB1 to target the SMC5-SMC6 complex to proteasomal degradation. This host complex would otherwise bind to viral episomal DNA, and prevents its transcription. Moderately stimulates transcription of many different viral and cellular transcription elements. Promoters and enhancers stimulated by HBx contain DNA binding sites for NF-kappa-B, AP-1, AP-2, c-EBP, ATF/CREB, or the calcium-activated factor NF-AT. This is Protein X from Hepatitis B virus genotype B2 (isolate Indonesia/pIDW420/1988) (HBV-B).